A 480-amino-acid chain; its full sequence is Molybdate-anion transporter (480 aa).

12 consecutive transmembrane segments (helical) span residues Met-1 to Leu-21, Ala-44 to Tyr-63, Ile-78 to Trp-98, Phe-129 to Phe-149, Thr-177 to Leu-197, Leu-199 to Val-219, Val-274 to Leu-294, Ser-304 to Phe-324, Val-339 to Val-359, Phe-369 to Leu-389, Ser-401 to Leu-421, and Phe-441 to Leu-461.

This sequence belongs to the major facilitator superfamily.

Its subcellular location is the cell membrane. Functionally, mediates high-affinity intracellular uptake of the rare oligo-element molybdenum. In Takifugu rubripes (Japanese pufferfish), this protein is Molybdate-anion transporter (mfsd5).